The primary structure comprises 1905 residues: Bromodomain adjacent to zinc finger domain protein 2A (1905 aa).

2 disordered regions span residues 1 to 59 (MEME…NGLS) and 362 to 434 (TSIF…PTTS). Polar residues-rich tracts occupy residues 35 to 59 (TNGSPMNFPQQGKSLNGDVNVNGLS), 379 to 391 (LQDNSFDLNNGSD), and 399 to 420 (TQSSDFPPSLTQPAPDQSSTIQ). At Thr507 the chain carries Phosphothreonine. Residue Ser509 is modified to Phosphoserine. The MBD domain occupies 546-617 (IATPEEVRLP…EHFSFSPRMP (72 aa)). Thr548 carries the phosphothreonine modification. At Ser613 the chain carries Phosphoserine. The interval 648–792 (ITGKRGRPRN…KEKEEVTKAK (145 aa)) is disordered. 2 DNA-binding regions (a.T hook) span residues 649–661 (TGKRGRPRNTEKA) and 670–682 (KRGRGRPPKVKIT). Over residues 656-668 (RNTEKAKTKEVPK) the composition is skewed to basic and acidic residues. A compositionally biased stretch (basic residues) spans 669 to 678 (VKRGRGRPPK). N6-acetyllysine; by KAT8 is present on Lys680. Over residues 686 to 709 (NKTDNRPLKKLEAQETLNEEDKAK) the composition is skewed to basic and acidic residues. The stretch at 693 to 792 (LKKLEAQETL…KEKEEVTKAK (100 aa)) forms a coiled coil. Basic residues predominate over residues 710–721 (IAKSKKKMRQKV). Over residues 725 to 734 (ECQTTIQGQA) the composition is skewed to polar residues. 2 stretches are compositionally biased toward basic and acidic residues: residues 739–748 (KQETKSLKQK) and 756–792 (AEKEKGKTKQEKLKEKVKREKKEKVKMKEKEEVTKAK). The residue at position 799 (Lys799) is an N6-acetyllysine. The DDT domain occupies 848 to 913 (SGAFSDCLTI…LKAALHDPGF (66 aa)). Residue Lys866 forms a Glycyl lysine isopeptide (Lys-Gly) (interchain with G-Cter in SUMO2) linkage. Position 1051 is a phosphoserine (Ser1051). Glycyl lysine isopeptide (Lys-Gly) (interchain with G-Cter in SUMO2) cross-links involve residues Lys1150 and Lys1172. Disordered regions lie at residues 1178 to 1220 (SNTT…PQAQ), 1283 to 1318 (LSSSVLTPDSSPGKLDPAPSQPPEEPEPDEAESSPD), and 1330 to 1412 (MPCN…RPPS). Ser1184 bears the Phosphoserine mark. A DNA-binding region (a.T hook 3) is located at residues 1186 to 1198 (ARARGRPRKTKPG). A compositionally biased stretch (low complexity) spans 1283-1293 (LSSSVLTPDSS). The segment covering 1306–1315 (EEPEPDEAES) has biased composition (acidic residues). Residues 1345–1359 (DQPTPSPQQLASSKP) are compositionally biased toward polar residues. Position 1397 is a phosphoserine (Ser1397). Residues 1404–1416 (PKRRGRPPSKFFK) constitute a DNA-binding region (a.T hook 4). Ser1559 carries the post-translational modification Phosphoserine. Residues Lys1676 and Lys1709 each participate in a glycyl lysine isopeptide (Lys-Gly) (interchain with G-Cter in SUMO2) cross-link. The PHD-type zinc finger occupies 1676 to 1726 (KVTCLVCRKGDNDEFLLLCDGCDRGCHIYCHRPKMEAVPEGDWFCTVCLAQ). 2 disordered regions span residues 1734 to 1755 (QKPGFPKRGQKRKSGYSLNFSE) and 1769 to 1789 (ESPAAGPRYSEEGLSPSKRRR). A phosphoserine mark is found at Ser1747, Ser1770, Ser1783, and Ser1785. The region spanning 1793 to 1897 (RNHHSDLTFC…RFFESRWEEF (105 aa)) is the Bromo domain.

It belongs to the WAL family. Component of the NoRC-1 ISWI chromatin remodeling complex at least composed of SMARCA1 and BAZ2A/TIP5, which regulates the spacing of histone octamers on the DNA template to facilitate access to DNA. Within the NoRC-1 ISWI chromatin remodeling complex interacts with SMARCA1; the interaction is direct. Component of the NoRC-5 ISWI chromatin remodeling complex (also called the NoRC nucleolar-remodeling complex), at least composed of SMARCA5/SNF2H and BAZ2A/TIP5, which regulates the spacing of histone octamers on the DNA template to facilitate access to DNA. Within the NoRC-5 ISWI chromatin remodeling complexes interacts with SMARCA5/SNF2H; the interaction is direct. Interacts with TTF1; the interaction is required for recruitment of the NoRC-5 ISWI chromatin remodeling complex to rDNA. Interacts with HDAC1. Interacts with SIN3A. Interacts with DNMT1 and DNM3B. Interacts with BEND3 and USP21. In terms of processing, acetylation at Lys-680 by KAT8/MOF promotes its dissociation from pRNA, affecting heterochromatin formation, nucleosome positioning and rDNA silencing. Deacetylation by SIRT1 in late S phase enhances pRNA-binding, allowing de novo DNA methylation and heterochromatin formation. Acetylation is high during S phase and declines to background levels in late S phase when the silent copies of rRNA genes are replicated. Ubiquitinated. Deubiquitinated by USP21 leading to its stabilization. As to expression, expressed at moderate levels in most tissues analyzed, including heart, brain, placenta, lung, skeletal muscle, kidney and pancreas.

The protein localises to the nucleus. It localises to the nucleolus. Regulatory subunit of the ATP-dependent NoRC-1 and NoRC-5 ISWI chromatin remodeling complexes, which form ordered nucleosome arrays on chromatin and facilitate access to DNA during DNA-templated processes such as DNA replication, transcription, and repair. Both complexes regulate the spacing of nucleosomes along the chromatin and have the ability to slide mononucleosomes to the center of a DNA template. Directly stimulates the ATPase activity of SMARCA5 in the NoRC-5 ISWI chromatin remodeling complex. The NoRC-1 ISWI chromatin remodeling complex has a lower ATP hydrolysis rate than the NoRC-5 ISWI chromatin remodeling complex. Within the NoRC-5 ISWI chromatin remodeling complex, mediates silencing of a fraction of rDNA by recruiting histone-modifying enzymes and DNA methyltransferases, leading to heterochromatin formation and transcriptional silencing. In the complex, it plays a central role by being recruited to rDNA and by targeting chromatin modifying enzymes such as HDAC1, leading to repress RNA polymerase I transcription. Recruited to rDNA via its interaction with TTF1 and its ability to recognize and bind histone H4 acetylated on 'Lys-16' (H4K16ac), leading to deacetylation of H4K5ac, H4K8ac, H4K12ac but not H4K16ac. Specifically binds pRNAs, 150-250 nucleotide RNAs that are complementary in sequence to the rDNA promoter; pRNA-binding is required for heterochromatin formation and rDNA silencing. In Homo sapiens (Human), this protein is Bromodomain adjacent to zinc finger domain protein 2A (BAZ2A).